The following is a 490-amino-acid chain: Chromosomal replication initiator protein DnaA (490 aa).

Positions 1-91 (MTMKGGVASQ…GELWAAHDAT (91 aa)) are domain I, interacts with DnaA modulators. The tract at residues 91 to 147 (TGRRIDLKSRLEFEAAAGAYVEATPKAVAAEPIEIVLPVSTDAPTVVAPSAKSPRTQ) is domain II. The domain III, AAA+ region stretch occupies residues 148–370 (GLQERFTFET…GALNTLSARA (223 aa)). ATP is bound by residues Gly-192, Gly-194, Lys-195, and Thr-196. Positions 371 to 490 (GEGLSRMTLD…LETLTRKLRG (120 aa)) are domain IV, binds dsDNA.

It belongs to the DnaA family. Oligomerizes as a right-handed, spiral filament on DNA at oriC.

Its subcellular location is the cytoplasm. Its function is as follows. Plays an essential role in the initiation and regulation of chromosomal replication. ATP-DnaA binds to the origin of replication (oriC) to initiate formation of the DNA replication initiation complex once per cell cycle. Binds the DnaA box (a 9 base pair repeat at the origin) and separates the double-stranded (ds)DNA. Forms a right-handed helical filament on oriC DNA; dsDNA binds to the exterior of the filament while single-stranded (ss)DNA is stabiized in the filament's interior. The ATP-DnaA-oriC complex binds and stabilizes one strand of the AT-rich DNA unwinding element (DUE), permitting loading of DNA polymerase. After initiation quickly degrades to an ADP-DnaA complex that is not apt for DNA replication. Binds acidic phospholipids. This Caulobacter vibrioides (strain ATCC 19089 / CIP 103742 / CB 15) (Caulobacter crescentus) protein is Chromosomal replication initiator protein DnaA.